Reading from the N-terminus, the 318-residue chain is Methionyl-tRNA formyltransferase (318 aa).

112–115 (SLLP) contacts (6S)-5,6,7,8-tetrahydrofolate.

This sequence belongs to the Fmt family.

The enzyme catalyses L-methionyl-tRNA(fMet) + (6R)-10-formyltetrahydrofolate = N-formyl-L-methionyl-tRNA(fMet) + (6S)-5,6,7,8-tetrahydrofolate + H(+). Attaches a formyl group to the free amino group of methionyl-tRNA(fMet). The formyl group appears to play a dual role in the initiator identity of N-formylmethionyl-tRNA by promoting its recognition by IF2 and preventing the misappropriation of this tRNA by the elongation apparatus. The chain is Methionyl-tRNA formyltransferase from Citrifermentans bemidjiense (strain ATCC BAA-1014 / DSM 16622 / JCM 12645 / Bem) (Geobacter bemidjiensis).